Here is a 380-residue protein sequence, read N- to C-terminus: Lipid-A-disaccharide synthase (380 aa).

This sequence belongs to the LpxB family.

The catalysed reaction is a lipid X + a UDP-2-N,3-O-bis[(3R)-3-hydroxyacyl]-alpha-D-glucosamine = a lipid A disaccharide + UDP + H(+). Its pathway is bacterial outer membrane biogenesis; LPS lipid A biosynthesis. Functionally, condensation of UDP-2,3-diacylglucosamine and 2,3-diacylglucosamine-1-phosphate to form lipid A disaccharide, a precursor of lipid A, a phosphorylated glycolipid that anchors the lipopolysaccharide to the outer membrane of the cell. This is Lipid-A-disaccharide synthase from Francisella philomiragia subsp. philomiragia (strain ATCC 25017 / CCUG 19701 / FSC 153 / O#319-036).